We begin with the raw amino-acid sequence, 375 residues long: Probable butyrate kinase 2 (375 aa).

Belongs to the acetokinase family.

The protein localises to the cytoplasm. It carries out the reaction butanoate + ATP = butanoyl phosphate + ADP. This is Probable butyrate kinase 2 from Thermotoga maritima (strain ATCC 43589 / DSM 3109 / JCM 10099 / NBRC 100826 / MSB8).